Here is a 633-residue protein sequence, read N- to C-terminus: 1-deoxy-D-xylulose-5-phosphate synthase 2 (633 aa).

Residues H73 and 113–115 (SHA) contribute to the thiamine diphosphate site. D145 provides a ligand contact to Mg(2+). Thiamine diphosphate is bound by residues 146-147 (GA), N175, Y286, and E367. N175 is a binding site for Mg(2+).

It belongs to the transketolase family. DXPS subfamily. As to quaternary structure, homodimer. Requires Mg(2+) as cofactor. It depends on thiamine diphosphate as a cofactor.

It catalyses the reaction D-glyceraldehyde 3-phosphate + pyruvate + H(+) = 1-deoxy-D-xylulose 5-phosphate + CO2. It participates in metabolic intermediate biosynthesis; 1-deoxy-D-xylulose 5-phosphate biosynthesis; 1-deoxy-D-xylulose 5-phosphate from D-glyceraldehyde 3-phosphate and pyruvate: step 1/1. In terms of biological role, catalyzes the acyloin condensation reaction between C atoms 2 and 3 of pyruvate and glyceraldehyde 3-phosphate to yield 1-deoxy-D-xylulose-5-phosphate (DXP). In Kitasatospora griseola (Streptomyces griseolosporeus), this protein is 1-deoxy-D-xylulose-5-phosphate synthase 2.